A 496-amino-acid chain; its full sequence is MLSLRPYEFWFVTGSQHLYGEEALKQVEEHSMMIVNELNQDSVFPFPLVFKSVVTTPEEIRRVCLEANASEQCAGVITWMHTFSPAKMWIGGLLELRKPLLHLHTQFNRDIPWDSIDMDFMNLNQSAHGDREYGFIGARMGVARKVVVGHWEDPEVRERLAKWMRTAVAFAESRNLKVARFGDNMREVAVTEGDKVGAQIQFGWSVNGYGIGDLVQYIRDVSEQKVNELLDEYEELYDIVPAGRQEGPVRESIREQARIELGLKAFLQDGNFTAFTTTFEDLHGMKQLPGLAVQRLMAEGYGFGGEGDWKTAALVRLMKVMADGKGTSFMEDYTYHLEPGNEMILGAHMLEVCPTIAATRPRIEVHPLSIGGKEDPARLVFDGGEGAAVNASLIDLGHRFRLIVNEVDAVKPEHDMPKLPVARILWKPRPSLRDSAEAWILAGGAHHTCFSFAVTTEQLQDFAEMAGIECVVINEHTSVSSFKNELKWNEVFWRGR.

Residues Glu306, Glu331, His348, and His447 each contribute to the Mn(2+) site.

Belongs to the arabinose isomerase family. As to quaternary structure, homotetramer. It depends on Mn(2+) as a cofactor.

It catalyses the reaction beta-L-arabinopyranose = L-ribulose. Its pathway is carbohydrate degradation; L-arabinose degradation via L-ribulose; D-xylulose 5-phosphate from L-arabinose (bacterial route): step 1/3. Inhibited by copper. Functionally, catalyzes the conversion of L-arabinose to L-ribulose. In vitro, converts D-galactose into D-tagatose. The protein is L-arabinose isomerase (araA) of Geobacillus stearothermophilus (Bacillus stearothermophilus).